Reading from the N-terminus, the 125-residue chain is Small ribosomal subunit protein uS11 (125 aa).

This sequence belongs to the universal ribosomal protein uS11 family. In terms of assembly, part of the 30S ribosomal subunit. Interacts with proteins S7 and S18. Binds to IF-3.

Its function is as follows. Located on the platform of the 30S subunit, it bridges several disparate RNA helices of the 16S rRNA. Forms part of the Shine-Dalgarno cleft in the 70S ribosome. In Aquifex aeolicus (strain VF5), this protein is Small ribosomal subunit protein uS11.